The primary structure comprises 236 residues: MPKHGKKYLEQAKLVDRDQVLEAREAMDMVKKLATAKFDETVEVAFRLGVDPRHADQMIRGAVVLPHGTGKSRKVAVFAKGDKAKEAEAAGADAVGAEDLVEKIQGGWLDFDVAVATPDVMGLVGKLGRLLGPKGLMPNPKTGTVTFDVARAIQEIKAGKIEYRVDKTGIIHAPIGKASFDVQKLLENYQTLLDTLIKAKPAAAKGQYIKSITLSSTMSPGVRVNPLKPHALLVQQ.

It belongs to the universal ribosomal protein uL1 family. In terms of assembly, part of the 50S ribosomal subunit.

In terms of biological role, binds directly to 23S rRNA. The L1 stalk is quite mobile in the ribosome, and is involved in E site tRNA release. Protein L1 is also a translational repressor protein, it controls the translation of the L11 operon by binding to its mRNA. This chain is Large ribosomal subunit protein uL1, found in Heliobacterium modesticaldum (strain ATCC 51547 / Ice1).